Consider the following 776-residue polypeptide: Semaphorin-4F (776 aa).

The N-terminal stretch at 1–39 (MLARAERPRPGPRPPPVFPFPPPLSLLLLLAILSAPVCG) is a signal peptide. Topologically, residues 40-665 (RVPRSVPRTS…GPSNRAHTVV (626 aa)) are extracellular. The Sema domain occupies 47 to 515 (RTSLPISEAD…SHTEVTQVNT (469 aa)). Asparagine 69 carries N-linked (GlcNAc...) asparagine glycosylation. Cysteine 117 and cysteine 127 are oxidised to a cystine. Asparagine 138 carries an N-linked (GlcNAc...) asparagine glycan. Cystine bridges form between cysteine 145–cysteine 154, cysteine 278–cysteine 389, and cysteine 302–cysteine 348. N-linked (GlcNAc...) asparagine glycosylation occurs at asparagine 514. The region spanning 517 to 568 (NCGRLQSCSECILAQDPVCAWSFRLDACVAHAGEHRGMVQDIESADVSSLCP) is the PSI domain. 3 disulfides stabilise this stretch: cysteine 518–cysteine 535, cysteine 527–cysteine 544, and cysteine 592–cysteine 633. An Ig-like C2-type domain is found at 585–640 (VGHVVLPCSPSSAWASCVWHQPSGVTALTPRRDGLEVVVTPGAMGAYACECQEGGA). The chain crosses the membrane as a helical span at residues 666 to 686 (GAGLVGFLLGVLAASLTLLLI). Residues 687-776 (GRRQQRRRQR…PLATCDETSI (90 aa)) are Cytoplasmic-facing. The disordered stretch occupies residues 702–741 (DKVGLDLGAPPSGTTSYSQDPPSPSPEDERLPLALGKRGS). Serine 724 and serine 726 each carry phosphoserine. The short motif at 774–776 (TSI) is the PDZ-binding element.

Belongs to the semaphorin family. Interacts (via PDZ-binding motif) with DLG4/SAP90 (via PDZ domain 2); this interaction may promote translocation of DLG4/SAP90 to the membrane. In terms of tissue distribution, expressed at low levels in the developing embryo. Expressed at high levels in the lung and adult central nervous system, including the dorsal root ganglia.

Its subcellular location is the cell membrane. The protein resides in the postsynaptic density. It localises to the perikaryon. The protein localises to the cell projection. It is found in the dendrite. In terms of biological role, probable cell surface receptor that regulates oligodendroglial precursor cell migration. Might also regulate differentiation of oligodendroglial precursor cells. Has growth cone collapse activity against retinal ganglion-cell axons. This is Semaphorin-4F (Sema4f) from Rattus norvegicus (Rat).